Here is a 688-residue protein sequence, read N- to C-terminus: Elongation factor G 2 (688 aa).

Residues 7 to 282 form the tr-type G domain; that stretch reads DSIRNIGIIS…AVAAYLPSPR (276 aa). GTP-binding positions include 16–23, 80–84, and 134–137; these read SHIDAGKT, DTPGH, and NKMD.

It belongs to the TRAFAC class translation factor GTPase superfamily. Classic translation factor GTPase family. EF-G/EF-2 subfamily.

It localises to the cytoplasm. Functionally, catalyzes the GTP-dependent ribosomal translocation step during translation elongation. During this step, the ribosome changes from the pre-translocational (PRE) to the post-translocational (POST) state as the newly formed A-site-bound peptidyl-tRNA and P-site-bound deacylated tRNA move to the P and E sites, respectively. Catalyzes the coordinated movement of the two tRNA molecules, the mRNA and conformational changes in the ribosome. The polypeptide is Elongation factor G 2 (Geobacter metallireducens (strain ATCC 53774 / DSM 7210 / GS-15)).